The sequence spans 322 residues: Beta-1,4-galactosyltransferase 7 (322 aa).

Over 1–9 (MVNISTINW) the chain is Cytoplasmic. The helical; Signal-anchor for type II membrane protein transmembrane segment at 10–30 (VFVCGLSFCLGGIAVLSLMPL) threads the bilayer. The Lumenal segment spans residues 31 to 322 (GSDCVCPLSN…TAAAASAVQT (292 aa)). UDP-alpha-D-galactose contacts are provided by proline 82, arginine 84, aspartate 145, and valine 146. Mn(2+) is bound at residue aspartate 147. UDP-alpha-D-galactose is bound by residues tyrosine 177, glycine 185, tryptophan 207, and glycine 208. Leucine 209 provides a ligand contact to beta-D-xylose. Residue glutamate 210 coordinates UDP-alpha-D-galactose. Aspartate 211 and aspartate 212 together coordinate beta-D-xylose. Residue asparagine 236 is glycosylated (N-linked (GlcNAc...) asparagine). 3 residues coordinate UDP-alpha-D-galactose: histidine 241, histidine 243, and arginine 250. Positions 241 and 243 each coordinate Mn(2+). Disulfide bonds link cysteine 255–cysteine 310 and cysteine 300–cysteine 308.

Belongs to the glycosyltransferase 7 family. Requires Mn(2+) as cofactor. As to expression, expressed in male and female adults. Expressed in head.

Its subcellular location is the golgi apparatus membrane. The catalysed reaction is 3-O-(beta-D-xylosyl)-L-seryl-[protein] + UDP-alpha-D-galactose = 3-O-(beta-D-galactosyl-(1-&gt;4)-beta-D-xylosyl)-L-seryl-[protein] + UDP + H(+). It functions in the pathway protein modification; protein glycosylation. Transfers galactose from UDP-D-Galactose (UDP-Gal) to the acceptor xylose residue in the linkage tetrasaccharide region of the glycosaminoglycan side chain of proteoglycans. No activity towards beta-GlcNAc, beta-Glc, beta-Gal, and beta-GalNAc as acceptors. This Drosophila melanogaster (Fruit fly) protein is Beta-1,4-galactosyltransferase 7.